The chain runs to 344 residues: Heat-inducible transcription repressor HrcA (344 aa).

The protein belongs to the HrcA family.

Its function is as follows. Negative regulator of class I heat shock genes (grpE-dnaK-dnaJ and groELS operons). Prevents heat-shock induction of these operons. The sequence is that of Heat-inducible transcription repressor HrcA from Streptococcus agalactiae serotype III (strain NEM316).